The sequence spans 327 residues: Beta-ketoacyl-[acyl-carrier-protein] synthase III 2 (327 aa).

Catalysis depends on residues C114 and H251. Residues 252–256 (SANLR) are ACP-binding. The active site involves N281.

Belongs to the thiolase-like superfamily. FabH family. As to quaternary structure, homodimer.

The protein resides in the cytoplasm. The enzyme catalyses malonyl-[ACP] + acetyl-CoA + H(+) = 3-oxobutanoyl-[ACP] + CO2 + CoA. Its pathway is lipid metabolism; fatty acid biosynthesis. In terms of biological role, catalyzes the condensation reaction of fatty acid synthesis by the addition to an acyl acceptor of two carbons from malonyl-ACP. Catalyzes the first condensation reaction which initiates fatty acid synthesis and may therefore play a role in governing the total rate of fatty acid production. Possesses both acetoacetyl-ACP synthase and acetyl transacylase activities. Its substrate specificity determines the biosynthesis of branched-chain and/or straight-chain of fatty acids. This chain is Beta-ketoacyl-[acyl-carrier-protein] synthase III 2, found in Bacillus cereus (strain ATCC 14579 / DSM 31 / CCUG 7414 / JCM 2152 / NBRC 15305 / NCIMB 9373 / NCTC 2599 / NRRL B-3711).